Reading from the N-terminus, the 695-residue chain is Threonine--tRNA ligase (695 aa).

The 70-residue stretch at 6–75 (SAIFVNTTDT…ETTATFTAVP (70 aa)) folds into the TGS domain. A catalytic region spans residues 274-580 (DHRRLGTELD…LLEHYAGAFP (307 aa)). Cys379, His430, and His557 together coordinate Zn(2+).

Belongs to the class-II aminoacyl-tRNA synthetase family. As to quaternary structure, homodimer. Requires Zn(2+) as cofactor.

The protein localises to the cytoplasm. The catalysed reaction is tRNA(Thr) + L-threonine + ATP = L-threonyl-tRNA(Thr) + AMP + diphosphate + H(+). Functionally, catalyzes the attachment of threonine to tRNA(Thr) in a two-step reaction: L-threonine is first activated by ATP to form Thr-AMP and then transferred to the acceptor end of tRNA(Thr). Also edits incorrectly charged L-seryl-tRNA(Thr). This chain is Threonine--tRNA ligase, found in Corynebacterium glutamicum (strain ATCC 13032 / DSM 20300 / JCM 1318 / BCRC 11384 / CCUG 27702 / LMG 3730 / NBRC 12168 / NCIMB 10025 / NRRL B-2784 / 534).